The following is a 358-amino-acid chain: Uroporphyrinogen decarboxylase (358 aa).

Substrate-binding positions include 29-33 (RQAGR), Phe-48, Asp-79, Tyr-155, Ser-210, and His-330.

This sequence belongs to the uroporphyrinogen decarboxylase family. As to quaternary structure, homodimer.

It is found in the cytoplasm. The catalysed reaction is uroporphyrinogen III + 4 H(+) = coproporphyrinogen III + 4 CO2. Its pathway is porphyrin-containing compound metabolism; protoporphyrin-IX biosynthesis; coproporphyrinogen-III from 5-aminolevulinate: step 4/4. Catalyzes the decarboxylation of four acetate groups of uroporphyrinogen-III to yield coproporphyrinogen-III. The polypeptide is Uroporphyrinogen decarboxylase (Bordetella parapertussis (strain 12822 / ATCC BAA-587 / NCTC 13253)).